We begin with the raw amino-acid sequence, 118 residues long: Hydrogenase maturation factor HypA (118 aa).

His2 is a binding site for Ni(2+). Zn(2+)-binding residues include Cys73, Cys76, Cys89, and Cys92.

It belongs to the HypA/HybF family.

Functionally, involved in the maturation of [NiFe] hydrogenases. Required for nickel insertion into the metal center of the hydrogenase. This Shewanella sp. (strain MR-7) protein is Hydrogenase maturation factor HypA.